The sequence spans 380 residues: Homoserine O-succinyltransferase (380 aa).

One can recognise an AB hydrolase-1 domain in the interval Asn49–Leu357. Ser155 acts as the Nucleophile in catalysis. Arg225 lines the substrate pocket. Residues Asp320 and His353 contribute to the active site. Asp354 is a binding site for substrate.

This sequence belongs to the AB hydrolase superfamily. MetX family. As to quaternary structure, homodimer.

It localises to the cytoplasm. It carries out the reaction L-homoserine + succinyl-CoA = O-succinyl-L-homoserine + CoA. The protein operates within amino-acid biosynthesis; L-methionine biosynthesis via de novo pathway; O-succinyl-L-homoserine from L-homoserine: step 1/1. In terms of biological role, transfers a succinyl group from succinyl-CoA to L-homoserine, forming succinyl-L-homoserine. This is Homoserine O-succinyltransferase from Laribacter hongkongensis (strain HLHK9).